A 172-amino-acid polypeptide reads, in one-letter code: Adenine phosphoribosyltransferase (172 aa).

The protein belongs to the purine/pyrimidine phosphoribosyltransferase family. As to quaternary structure, homodimer.

The protein localises to the cytoplasm. The enzyme catalyses AMP + diphosphate = 5-phospho-alpha-D-ribose 1-diphosphate + adenine. It participates in purine metabolism; AMP biosynthesis via salvage pathway; AMP from adenine: step 1/1. In terms of biological role, catalyzes a salvage reaction resulting in the formation of AMP, that is energically less costly than de novo synthesis. In Pelobacter propionicus (strain DSM 2379 / NBRC 103807 / OttBd1), this protein is Adenine phosphoribosyltransferase.